The sequence spans 303 residues: UDP-3-O-acyl-N-acetylglucosamine deacetylase (303 aa).

The Zn(2+) site is built by His-78, His-237, and Asp-241. His-264 serves as the catalytic Proton donor.

The protein belongs to the LpxC family. Zn(2+) is required as a cofactor.

The catalysed reaction is a UDP-3-O-[(3R)-3-hydroxyacyl]-N-acetyl-alpha-D-glucosamine + H2O = a UDP-3-O-[(3R)-3-hydroxyacyl]-alpha-D-glucosamine + acetate. The protein operates within glycolipid biosynthesis; lipid IV(A) biosynthesis; lipid IV(A) from (3R)-3-hydroxytetradecanoyl-[acyl-carrier-protein] and UDP-N-acetyl-alpha-D-glucosamine: step 2/6. Catalyzes the hydrolysis of UDP-3-O-myristoyl-N-acetylglucosamine to form UDP-3-O-myristoylglucosamine and acetate, the committed step in lipid A biosynthesis. This chain is UDP-3-O-acyl-N-acetylglucosamine deacetylase, found in Teredinibacter turnerae (strain ATCC 39867 / T7901).